The following is a 102-amino-acid chain: ATP-dependent Clp protease adapter protein ClpS (102 aa).

Belongs to the ClpS family. In terms of assembly, binds to the N-terminal domain of the chaperone ClpA.

Functionally, involved in the modulation of the specificity of the ClpAP-mediated ATP-dependent protein degradation. The protein is ATP-dependent Clp protease adapter protein ClpS of Shewanella amazonensis (strain ATCC BAA-1098 / SB2B).